Consider the following 387-residue polypeptide: 3-ketoacyl-CoA thiolase (387 aa).

C91 (acyl-thioester intermediate) is an active-site residue. Residues H343 and C373 each act as proton acceptor in the active site.

It belongs to the thiolase-like superfamily. Thiolase family. Heterotetramer of two alpha chains (FadB) and two beta chains (FadA).

The protein localises to the cytoplasm. It carries out the reaction an acyl-CoA + acetyl-CoA = a 3-oxoacyl-CoA + CoA. Its pathway is lipid metabolism; fatty acid beta-oxidation. Its function is as follows. Catalyzes the final step of fatty acid oxidation in which acetyl-CoA is released and the CoA ester of a fatty acid two carbons shorter is formed. The protein is 3-ketoacyl-CoA thiolase of Shewanella baltica (strain OS155 / ATCC BAA-1091).